The chain runs to 302 residues: tRNA pseudouridine synthase B (302 aa).

Histidine 40 is a substrate binding site. Residue aspartate 45 is the Nucleophile of the active site. Residues tyrosine 73, tyrosine 178, and leucine 199 each coordinate substrate.

The protein belongs to the pseudouridine synthase TruB family. Type 1 subfamily.

The catalysed reaction is uridine(55) in tRNA = pseudouridine(55) in tRNA. Functionally, responsible for synthesis of pseudouridine from uracil-55 in the psi GC loop of transfer RNAs. This Buchnera aphidicola subsp. Baizongia pistaciae (strain Bp) protein is tRNA pseudouridine synthase B.